A 199-amino-acid chain; its full sequence is ATP-dependent Clp protease proteolytic subunit (199 aa).

S99 (nucleophile) is an active-site residue. The active site involves H124.

The protein belongs to the peptidase S14 family. In terms of assembly, fourteen ClpP subunits assemble into 2 heptameric rings which stack back to back to give a disk-like structure with a central cavity, resembling the structure of eukaryotic proteasomes.

It is found in the cytoplasm. The catalysed reaction is Hydrolysis of proteins to small peptides in the presence of ATP and magnesium. alpha-casein is the usual test substrate. In the absence of ATP, only oligopeptides shorter than five residues are hydrolyzed (such as succinyl-Leu-Tyr-|-NHMec, and Leu-Tyr-Leu-|-Tyr-Trp, in which cleavage of the -Tyr-|-Leu- and -Tyr-|-Trp bonds also occurs).. Its function is as follows. Cleaves peptides in various proteins in a process that requires ATP hydrolysis. Has a chymotrypsin-like activity. Plays a major role in the degradation of misfolded proteins. The sequence is that of ATP-dependent Clp protease proteolytic subunit from Lactococcus lactis subsp. lactis (strain IL1403) (Streptococcus lactis).